A 192-amino-acid polypeptide reads, in one-letter code: Potassium-transporting ATPase KdpC subunit (192 aa).

A helical membrane pass occupies residues P7–M27.

It belongs to the KdpC family. In terms of assembly, the system is composed of three essential subunits: KdpA, KdpB and KdpC.

Its subcellular location is the cell inner membrane. Its function is as follows. Part of the high-affinity ATP-driven potassium transport (or Kdp) system, which catalyzes the hydrolysis of ATP coupled with the electrogenic transport of potassium into the cytoplasm. This subunit acts as a catalytic chaperone that increases the ATP-binding affinity of the ATP-hydrolyzing subunit KdpB by the formation of a transient KdpB/KdpC/ATP ternary complex. This Paraburkholderia phytofirmans (strain DSM 17436 / LMG 22146 / PsJN) (Burkholderia phytofirmans) protein is Potassium-transporting ATPase KdpC subunit.